We begin with the raw amino-acid sequence, 94 residues long: Enhancer of yellow 2 transcription factor (94 aa).

It belongs to the ENY2 family. Component of the nuclear pore complex (NPC)-associated AMEX complex (anchoring and mRNA export complex), composed of at least e(y)2 and xmas-2. Component of the SAGA transcription coactivator-HAT complexes, at least composed of Ada2b, e(y)2, Pcaf/Gcn5, Taf10 and Nipped-A/Trrap. Within the SAGA complex, e(y)2, Sgf11, and not/nonstop form an additional subcomplex of SAGA called the DUB module (deubiquitination module). Component of the THO complex, composed of at least e(y)2, HPR1, THO2, THOC5, THOC6 and THOC7. Interacts with e(y)1. Interacts with su(Hw) (via zinc fingers). Interacts with xmas-2; required for localization to the nuclear periphery. Interacts with the nuclear pore complex (NPC).

The protein localises to the nucleus. It localises to the nucleoplasm. The protein resides in the cytoplasm. Its function is as follows. Involved in mRNA export coupled transcription activation by association with both the AMEX and the SAGA complexes. The SAGA complex is a multiprotein complex that activates transcription by remodeling chromatin and mediating histone acetylation and deubiquitination. Within the SAGA complex, participates in a subcomplex that specifically deubiquitinates histone H2B. The SAGA complex is recruited to specific gene promoters by activators, where it is required for transcription. Required for nuclear receptor-mediated transactivation. Involved in transcription elongation by recruiting the THO complex onto nascent mRNA. The AMEX complex functions in docking export-competent ribonucleoprotein particles (mRNPs) to the nuclear entrance of the nuclear pore complex (nuclear basket). AMEX participates in mRNA export and accurate chromatin positioning in the nucleus by tethering genes to the nuclear periphery. The polypeptide is Enhancer of yellow 2 transcription factor (Drosophila mojavensis (Fruit fly)).